A 341-amino-acid chain; its full sequence is Probable long-chain-alcohol O-fatty-acyltransferase 1 (341 aa).

The next 8 membrane-spanning stretches (helical) occupy residues 7–27, 36–56, 58–78, 120–140, 149–169, 233–253, 261–281, and 293–313; these read NLIE…YISS, LLSI…LSCV, FCAI…LLFA, PMPK…LHVY, FVVL…VLVF, MFAG…LLYF, TWEV…EIAV, and AVSG…LFLA.

Belongs to the wax synthase family.

It localises to the membrane. It catalyses the reaction a long chain fatty alcohol + a fatty acyl-CoA = a wax ester + CoA. Its function is as follows. Catalyzes the final step in the synthesis of long-chain linear esters (waxes). The polypeptide is Probable long-chain-alcohol O-fatty-acyltransferase 1 (AT1) (Arabidopsis thaliana (Mouse-ear cress)).